The following is a 276-amino-acid chain: Diaminopimelate epimerase (276 aa).

The substrate site is built by Asn13, Gln46, and Asn66. Cys75 serves as the catalytic Proton donor. Residues 76-77 (GN), Asn159, Asn192, and 210-211 (ER) each bind substrate. Cys219 (proton acceptor) is an active-site residue. Substrate is bound at residue 220-221 (GS).

The protein belongs to the diaminopimelate epimerase family. In terms of assembly, homodimer.

It localises to the cytoplasm. It carries out the reaction (2S,6S)-2,6-diaminopimelate = meso-2,6-diaminopimelate. It participates in amino-acid biosynthesis; L-lysine biosynthesis via DAP pathway; DL-2,6-diaminopimelate from LL-2,6-diaminopimelate: step 1/1. Its function is as follows. Catalyzes the stereoinversion of LL-2,6-diaminopimelate (L,L-DAP) to meso-diaminopimelate (meso-DAP), a precursor of L-lysine and an essential component of the bacterial peptidoglycan. This Pseudoalteromonas atlantica (strain T6c / ATCC BAA-1087) protein is Diaminopimelate epimerase.